The following is a 509-amino-acid chain: Histone deacetylase 2 (509 aa).

The segment at 24–338 (RRVCYFYDPE…WCYETGVALG (315 aa)) is histone deacetylase. H158 serves as the catalytic Proton donor/acceptor. Zn(2+)-binding residues include D193, H195, and D281. The interval 394-509 (PSVQFEERIP…NAKNEPGSSL (116 aa)) is disordered. Composition is skewed to basic and acidic residues over residues 398–409 (FEERIPETKLPE), 418–434 (DERH…DHKP), and 448–472 (VKRE…HKVP). Over residues 481-494 (SSKQVPTADANSMA) the composition is skewed to polar residues.

Belongs to the histone deacetylase family. HD Type 1 subfamily. It depends on Zn(2+) as a cofactor. Expressed in roots.

The protein resides in the nucleus. The enzyme catalyses N(6)-acetyl-L-lysyl-[histone] + H2O = L-lysyl-[histone] + acetate. Responsible for the deacetylation of lysine residues on the N-terminal part of the core histones (H2A, H2B, H3 and H4). Histone deacetylation gives a tag for epigenetic repression and plays an important role in transcriptional regulation, cell cycle progression and developmental events. Histone deacetylases act via the formation of large multiprotein complexes. The chain is Histone deacetylase 2 from Oryza sativa subsp. japonica (Rice).